The sequence spans 389 residues: Lipid-A-disaccharide synthase (389 aa).

The protein belongs to the LpxB family.

It catalyses the reaction a lipid X + a UDP-2-N,3-O-bis[(3R)-3-hydroxyacyl]-alpha-D-glucosamine = a lipid A disaccharide + UDP + H(+). It participates in bacterial outer membrane biogenesis; LPS lipid A biosynthesis. In terms of biological role, condensation of UDP-2,3-diacylglucosamine and 2,3-diacylglucosamine-1-phosphate to form lipid A disaccharide, a precursor of lipid A, a phosphorylated glycolipid that anchors the lipopolysaccharide to the outer membrane of the cell. The chain is Lipid-A-disaccharide synthase from Paraburkholderia phymatum (strain DSM 17167 / CIP 108236 / LMG 21445 / STM815) (Burkholderia phymatum).